The following is a 333-amino-acid chain: L-lactate dehydrogenase A chain (333 aa).

A2 carries the post-translational modification N-acetylalanine. NAD(+)-binding positions include 30 to 58 (GAVG…MEDK) and R100. Residues R107, N139, and R170 each coordinate substrate. An NAD(+)-binding site is contributed by N139. H194 functions as the Proton acceptor in the catalytic mechanism. A substrate-binding site is contributed by T249.

It belongs to the LDH/MDH superfamily. LDH family. Homotetramer.

The protein resides in the cytoplasm. It catalyses the reaction (S)-lactate + NAD(+) = pyruvate + NADH + H(+). It participates in fermentation; pyruvate fermentation to lactate; (S)-lactate from pyruvate: step 1/1. In terms of biological role, interconverts simultaneously and stereospecifically pyruvate and lactate with concomitant interconversion of NADH and NAD(+). The sequence is that of L-lactate dehydrogenase A chain (ldha) from Squalus acanthias (Spiny dogfish).